Consider the following 61-residue polypeptide: Sperm protamine P1 (61 aa).

The tract at residues 1–61 is disordered; the sequence is MARYRHSRSR…RYSRRRRRRY (61 aa).

This sequence belongs to the protamine P1 family. As to expression, testis.

The protein resides in the nucleus. Its subcellular location is the chromosome. Protamines substitute for histones in the chromatin of sperm during the haploid phase of spermatogenesis. They compact sperm DNA into a highly condensed, stable and inactive complex. This chain is Sperm protamine P1 (PRM1), found in Setonix brachyurus (Quokka).